A 416-amino-acid chain; its full sequence is Isobutyryl-CoA dehydrogenase, mitochondrial (416 aa).

Residues 1 to 21 (MISGLFKLSNKQSVLQNATKL) constitute a mitochondrion transit peptide. FAD contacts are provided by residues 156 to 165 (YCLTEPGSGS) and 189 to 191 (FIS). Serine 165 is a substrate binding site. Residue 273–276 (NGGR) coordinates substrate. Residues arginine 301, 311–312 (FQ), and 370–374 (QLFGG) each bind FAD. Residue glutamate 397 is the Proton acceptor of the active site. 399 to 401 (SDA) provides a ligand contact to FAD. Residue arginine 409 participates in substrate binding.

The protein belongs to the acyl-CoA dehydrogenase family. In terms of assembly, homotetramer. Requires FAD as cofactor.

The protein resides in the mitochondrion. It carries out the reaction 2-methylpropanoyl-CoA + oxidized [electron-transfer flavoprotein] + H(+) = 2-methylpropenoyl-CoA + reduced [electron-transfer flavoprotein]. The enzyme catalyses (2S)-2-methylbutanoyl-CoA + oxidized [electron-transfer flavoprotein] + H(+) = (2E)-2-methylbut-2-enoyl-CoA + reduced [electron-transfer flavoprotein]. It catalyses the reaction propanoyl-CoA + oxidized [electron-transfer flavoprotein] + H(+) = acryloyl-CoA + reduced [electron-transfer flavoprotein]. Its pathway is amino-acid degradation; L-valine degradation. In terms of biological role, isobutyryl-CoA dehydrogenase which catalyzes one of the steps of the valine catabolic pathway. To a lesser extent, is also able to catalyze the oxidation of (2S)-2-methylbutanoyl-CoA. This chain is Isobutyryl-CoA dehydrogenase, mitochondrial (acad8), found in Dictyostelium discoideum (Social amoeba).